A 276-amino-acid polypeptide reads, in one-letter code: Eukaryotic translation initiation factor 3 subunit G-2 (276 aa).

The 79-residue stretch at 196-274 folds into the RRM domain; the sequence is SAVRISNLSE…LILCVEWSKP (79 aa).

This sequence belongs to the eIF-3 subunit G family. Component of the eukaryotic translation initiation factor 3 (eIF-3) complex. The eIF-3 complex interacts with pix.

It is found in the cytoplasm. Its function is as follows. RNA-binding component of the eukaryotic translation initiation factor 3 (eIF-3) complex, which is involved in protein synthesis of a specialized repertoire of mRNAs and, together with other initiation factors, stimulates binding of mRNA and methionyl-tRNAi to the 40S ribosome. The eIF-3 complex specifically targets and initiates translation of a subset of mRNAs involved in cell proliferation. This subunit can bind 18S rRNA. The polypeptide is Eukaryotic translation initiation factor 3 subunit G-2 (Drosophila persimilis (Fruit fly)).